The chain runs to 485 residues: Endo-1,4-beta-xylanase C (485 aa).

The first 19 residues, 1 to 19, serve as a signal peptide directing secretion; that stretch reads MKFLQIIPVLLSLTSTTLA. In terms of domain architecture, GH11 spans 34–234; that stretch reads KETGNKVGTI…GNGGVSGTAD (201 aa). N-linked (GlcNAc...) asparagine glycosylation is found at asparagine 56 and asparagine 107. The active-site Nucleophile is the glutamate 128. Residue asparagine 175 is glycosylated (N-linked (GlcNAc...) asparagine). Glutamate 221 (proton donor) is an active-site residue. A disordered region spans residues 250–450; that stretch reads ASPAPAGGAP…PQNASDGGNC (201 aa). 2 stretches are compositionally biased toward low complexity: residues 265 to 330 and 344 to 354; these read AGND…QGQH and GSDFNNWSQGG. Repeat copies occupy residues 275-280, 281-286, 287-292, 293-298, 299-304, 310-315, and 316-321. Residues 275-321 are 7 X 6 AA tandem repeats of G-Q-Q-P-P-Q; sequence GQQPPQGQQPPQGQQPPQGQQPPQGQQPPQGNDQQGQQPPQGQQPPQ. N-linked (GlcNAc...) asparagine glycosylation occurs at asparagine 349. 8 consecutive repeat copies span residues 353 to 361, 362 to 370, 371 to 379, 380 to 388, 389 to 397, 399 to 407, 408 to 416, and 417 to 425. Residues 353-425 form an 8 X 9 AA tandem repeats of G-G-[SN]-P-W-G-G-N-Q region; sequence GGSPWGGNQG…QGGNPWGGNQ (73 aa). The span at 355–425 shows a compositional bias: gly residues; the sequence is SPWGGNQGGS…QGGNPWGGNQ (71 aa). Residues 426 to 445 are compositionally biased toward low complexity; it reads WGAPQNAAAPQSAAAPQNAS. Residue asparagine 443 is glycosylated (N-linked (GlcNAc...) asparagine). A CBM1 domain is found at 449 to 484; that stretch reads NCASLWGQCGGQGYNGPSCCSEGSCKPINEYFHQCQ.

It belongs to the glycosyl hydrolase 11 (cellulase G) family.

Its subcellular location is the secreted. The enzyme catalyses Endohydrolysis of (1-&gt;4)-beta-D-xylosidic linkages in xylans.. It participates in glycan degradation; xylan degradation. In terms of biological role, endo-1,4-beta-xylanase involved in the hydrolysis of xylan, a major structural heterogeneous polysaccharide found in plant biomass representing the second most abundant polysaccharide in the biosphere, after cellulose. This chain is Endo-1,4-beta-xylanase C (xynC), found in Neocallimastix patriciarum (Rumen fungus).